The following is a 202-amino-acid chain: Ribonuclease HII (202 aa).

The RNase H type-2 domain occupies 15-202 (QGVAGVDEAG…APIKAFGISA (188 aa)). The a divalent metal cation site is built by aspartate 21, glutamate 22, and aspartate 113.

It belongs to the RNase HII family. It depends on Mn(2+) as a cofactor. Requires Mg(2+) as cofactor.

It is found in the cytoplasm. The enzyme catalyses Endonucleolytic cleavage to 5'-phosphomonoester.. Functionally, endonuclease that specifically degrades the RNA of RNA-DNA hybrids. The polypeptide is Ribonuclease HII (Bordetella avium (strain 197N)).